The sequence spans 123 residues: Small ribosomal subunit protein uS12 (123 aa).

3-methylthioaspartic acid is present on D89.

Belongs to the universal ribosomal protein uS12 family. Part of the 30S ribosomal subunit. Contacts proteins S8 and S17. May interact with IF1 in the 30S initiation complex.

With S4 and S5 plays an important role in translational accuracy. Its function is as follows. Interacts with and stabilizes bases of the 16S rRNA that are involved in tRNA selection in the A site and with the mRNA backbone. Located at the interface of the 30S and 50S subunits, it traverses the body of the 30S subunit contacting proteins on the other side and probably holding the rRNA structure together. The combined cluster of proteins S8, S12 and S17 appears to hold together the shoulder and platform of the 30S subunit. The sequence is that of Small ribosomal subunit protein uS12 from Granulibacter bethesdensis (strain ATCC BAA-1260 / CGDNIH1).